We begin with the raw amino-acid sequence, 393 residues long: MKIKEKIVLAYSGGLDTSVIVKWLQNELNFEVITFTADLGQGEEILLAKKKAKLLNIKNIFVKNLKKEFIKNFVFPFLRSSSTYENNYLLGTAIARPLIVKELMKISYYLNTNYVSHGATGKGNDQIRFELGFKYFNPKIKIIAPWRIWNLNSRNSLLNFCIKNNIKFDSKTKKYSIDKNLFHNSYEGGNLDNINYEPDEPMWEHTLSNYNSLDYPIYISLTFKNGDPIKINNKNYNVEELFLKLNNLGSIAGIGRLDIIENRLIGIKSRGCYESPGASIIMYARKKLESLILDKEIYSFKEEIALKYSKLVYNGYWWSPERILLQKIIDYTQTSINGIIKLKIFKGQINIASINSINSLFNSKNSSFDEISNLFNQSDSSGFINIKSLRLII.

ATP contacts are provided by residues 10–18 (AYSGGLDTS) and alanine 37. An L-citrulline-binding site is contributed by tyrosine 88. Glycine 118 serves as a coordination point for ATP. Positions 120, 124, and 125 each coordinate L-aspartate. Asparagine 124 contacts L-citrulline. Residues arginine 128, serine 176, serine 185, glutamate 261, and tyrosine 273 each contribute to the L-citrulline site.

Belongs to the argininosuccinate synthase family. Type 1 subfamily. Homotetramer.

The protein resides in the cytoplasm. It catalyses the reaction L-citrulline + L-aspartate + ATP = 2-(N(omega)-L-arginino)succinate + AMP + diphosphate + H(+). It participates in amino-acid biosynthesis; L-arginine biosynthesis; L-arginine from L-ornithine and carbamoyl phosphate: step 2/3. This chain is Argininosuccinate synthase, found in Carsonella ruddii (strain PV).